Here is a 334-residue protein sequence, read N- to C-terminus: N-acetyl-gamma-glutamyl-phosphate reductase (334 aa).

The active site involves cysteine 154.

It belongs to the NAGSA dehydrogenase family. Type 1 subfamily.

The protein resides in the cytoplasm. The catalysed reaction is N-acetyl-L-glutamate 5-semialdehyde + phosphate + NADP(+) = N-acetyl-L-glutamyl 5-phosphate + NADPH + H(+). The protein operates within amino-acid biosynthesis; L-arginine biosynthesis; N(2)-acetyl-L-ornithine from L-glutamate: step 3/4. In terms of biological role, catalyzes the NADPH-dependent reduction of N-acetyl-5-glutamyl phosphate to yield N-acetyl-L-glutamate 5-semialdehyde. The chain is N-acetyl-gamma-glutamyl-phosphate reductase from Salmonella typhimurium (strain LT2 / SGSC1412 / ATCC 700720).